The sequence spans 158 residues: Crossover junction endodeoxyribonuclease RuvC (158 aa).

Catalysis depends on residues Asp7, Glu67, and Asp139. Asp7, Glu67, and Asp139 together coordinate Mg(2+).

This sequence belongs to the RuvC family. Homodimer which binds Holliday junction (HJ) DNA. The HJ becomes 2-fold symmetrical on binding to RuvC with unstacked arms; it has a different conformation from HJ DNA in complex with RuvA. In the full resolvosome a probable DNA-RuvA(4)-RuvB(12)-RuvC(2) complex forms which resolves the HJ. Mg(2+) is required as a cofactor.

The protein localises to the cytoplasm. The catalysed reaction is Endonucleolytic cleavage at a junction such as a reciprocal single-stranded crossover between two homologous DNA duplexes (Holliday junction).. In terms of biological role, the RuvA-RuvB-RuvC complex processes Holliday junction (HJ) DNA during genetic recombination and DNA repair. Endonuclease that resolves HJ intermediates. Cleaves cruciform DNA by making single-stranded nicks across the HJ at symmetrical positions within the homologous arms, yielding a 5'-phosphate and a 3'-hydroxyl group; requires a central core of homology in the junction. The consensus cleavage sequence is 5'-(A/T)TT(C/G)-3'. Cleavage occurs on the 3'-side of the TT dinucleotide at the point of strand exchange. HJ branch migration catalyzed by RuvA-RuvB allows RuvC to scan DNA until it finds its consensus sequence, where it cleaves and resolves the cruciform DNA. The polypeptide is Crossover junction endodeoxyribonuclease RuvC (Prochlorococcus marinus (strain MIT 9211)).